The following is a 522-amino-acid chain: Transactivator/viroplasmin protein (522 aa).

Residues 111–126 (QGIQIPQKSEPNSSVA) are compositionally biased toward polar residues. 2 disordered regions span residues 111–133 (QGIQ…AESG) and 491–522 (SADS…KASG).

The protein belongs to the caulimoviridae viroplasmin family.

It is found in the host cytoplasm. Its function is as follows. Enhances the ribosomal termination-reinitiation event leading to the translation of major open reading frames on the polycistronic viral RNAs. The protein is Transactivator/viroplasmin protein of Arabidopsis thaliana (Mouse-ear cress).